Here is a 280-residue protein sequence, read N- to C-terminus: Shikimate dehydrogenase (NADP(+)) (280 aa).

Shikimate contacts are provided by residues 20–22 (SRS) and threonine 67. Lysine 71 serves as the catalytic Proton acceptor. Aspartate 82 serves as a coordination point for NADP(+). Residues asparagine 91 and aspartate 106 each coordinate shikimate. NADP(+) contacts are provided by residues 131-135 (GAGGS) and leucine 220. Tyrosine 222 contacts shikimate. Glycine 243 is an NADP(+) binding site.

This sequence belongs to the shikimate dehydrogenase family. In terms of assembly, homodimer.

The catalysed reaction is shikimate + NADP(+) = 3-dehydroshikimate + NADPH + H(+). Its pathway is metabolic intermediate biosynthesis; chorismate biosynthesis; chorismate from D-erythrose 4-phosphate and phosphoenolpyruvate: step 4/7. Its function is as follows. Involved in the biosynthesis of the chorismate, which leads to the biosynthesis of aromatic amino acids. Catalyzes the reversible NADPH linked reduction of 3-dehydroshikimate (DHSA) to yield shikimate (SA). The sequence is that of Shikimate dehydrogenase (NADP(+)) from Rhodopseudomonas palustris (strain HaA2).